The primary structure comprises 258 residues: Acetylglutamate kinase (258 aa).

Substrate is bound by residues 41-42 (GG), arginine 63, and asparagine 156.

This sequence belongs to the acetylglutamate kinase family. ArgB subfamily.

It localises to the cytoplasm. It catalyses the reaction N-acetyl-L-glutamate + ATP = N-acetyl-L-glutamyl 5-phosphate + ADP. The protein operates within amino-acid biosynthesis; L-arginine biosynthesis; N(2)-acetyl-L-ornithine from L-glutamate: step 2/4. In terms of biological role, catalyzes the ATP-dependent phosphorylation of N-acetyl-L-glutamate. This chain is Acetylglutamate kinase, found in Bacillus amyloliquefaciens (Bacillus velezensis).